A 380-amino-acid polypeptide reads, in one-letter code: Epoxyqueuosine reductase (380 aa).

Aspartate 134 serves as the catalytic Proton donor. The 4Fe-4S ferredoxin-type 1 domain maps to 178–208; that stretch reads FPPDKPIEDQCGGCTKCIDICPTGALIQGGQ. Cysteine 188, cysteine 191, cysteine 194, cysteine 198, cysteine 214, cysteine 240, cysteine 243, and cysteine 247 together coordinate [4Fe-4S] cluster. The region spanning 226–258 is the 4Fe-4S ferredoxin-type 2 domain; sequence PEEYRDKIGNRIYGCDTCQTVCPKNKGMDFHNH.

Belongs to the QueG family. As to quaternary structure, monomer. The cofactor is cob(II)alamin. [4Fe-4S] cluster is required as a cofactor.

Its subcellular location is the cytoplasm. The catalysed reaction is epoxyqueuosine(34) in tRNA + AH2 = queuosine(34) in tRNA + A + H2O. The protein operates within tRNA modification; tRNA-queuosine biosynthesis. In terms of biological role, catalyzes the conversion of epoxyqueuosine (oQ) to queuosine (Q), which is a hypermodified base found in the wobble positions of tRNA(Asp), tRNA(Asn), tRNA(His) and tRNA(Tyr). The protein is Epoxyqueuosine reductase of Bacillus cereus (strain ATCC 14579 / DSM 31 / CCUG 7414 / JCM 2152 / NBRC 15305 / NCIMB 9373 / NCTC 2599 / NRRL B-3711).